The sequence spans 404 residues: Probable tRNA sulfurtransferase (404 aa).

Positions 60–165 (TAVAESLKQV…EEAAYLSYET (106 aa)) constitute a THUMP domain. ATP is bound by residues 183–184 (ML), 208–209 (HF), Arg265, Gly287, and Gln296.

This sequence belongs to the ThiI family.

It is found in the cytoplasm. It catalyses the reaction [ThiI sulfur-carrier protein]-S-sulfanyl-L-cysteine + a uridine in tRNA + 2 reduced [2Fe-2S]-[ferredoxin] + ATP + H(+) = [ThiI sulfur-carrier protein]-L-cysteine + a 4-thiouridine in tRNA + 2 oxidized [2Fe-2S]-[ferredoxin] + AMP + diphosphate. The catalysed reaction is [ThiS sulfur-carrier protein]-C-terminal Gly-Gly-AMP + S-sulfanyl-L-cysteinyl-[cysteine desulfurase] + AH2 = [ThiS sulfur-carrier protein]-C-terminal-Gly-aminoethanethioate + L-cysteinyl-[cysteine desulfurase] + A + AMP + 2 H(+). It functions in the pathway cofactor biosynthesis; thiamine diphosphate biosynthesis. Catalyzes the ATP-dependent transfer of a sulfur to tRNA to produce 4-thiouridine in position 8 of tRNAs, which functions as a near-UV photosensor. Also catalyzes the transfer of sulfur to the sulfur carrier protein ThiS, forming ThiS-thiocarboxylate. This is a step in the synthesis of thiazole, in the thiamine biosynthesis pathway. The sulfur is donated as persulfide by IscS. In Streptococcus pneumoniae (strain ATCC 700669 / Spain 23F-1), this protein is Probable tRNA sulfurtransferase.